The primary structure comprises 158 residues: SsrA-binding protein (158 aa).

A disordered region spans residues Lys-134–Gly-158. Residues Asp-137 to Arg-149 are compositionally biased toward basic and acidic residues.

The protein belongs to the SmpB family.

It localises to the cytoplasm. Its function is as follows. Required for rescue of stalled ribosomes mediated by trans-translation. Binds to transfer-messenger RNA (tmRNA), required for stable association of tmRNA with ribosomes. tmRNA and SmpB together mimic tRNA shape, replacing the anticodon stem-loop with SmpB. tmRNA is encoded by the ssrA gene; the 2 termini fold to resemble tRNA(Ala) and it encodes a 'tag peptide', a short internal open reading frame. During trans-translation Ala-aminoacylated tmRNA acts like a tRNA, entering the A-site of stalled ribosomes, displacing the stalled mRNA. The ribosome then switches to translate the ORF on the tmRNA; the nascent peptide is terminated with the 'tag peptide' encoded by the tmRNA and targeted for degradation. The ribosome is freed to recommence translation, which seems to be the essential function of trans-translation. The chain is SsrA-binding protein from Allorhizobium ampelinum (strain ATCC BAA-846 / DSM 112012 / S4) (Agrobacterium vitis (strain S4)).